We begin with the raw amino-acid sequence, 538 residues long: Bifunctional purine biosynthesis protein PurH (538 aa).

Positions 6–158 (KHIPAPDLHR…KNHAYVATVV (153 aa)) constitute an MGS-like domain.

Belongs to the PurH family.

The catalysed reaction is (6R)-10-formyltetrahydrofolate + 5-amino-1-(5-phospho-beta-D-ribosyl)imidazole-4-carboxamide = 5-formamido-1-(5-phospho-D-ribosyl)imidazole-4-carboxamide + (6S)-5,6,7,8-tetrahydrofolate. The enzyme catalyses IMP + H2O = 5-formamido-1-(5-phospho-D-ribosyl)imidazole-4-carboxamide. Its pathway is purine metabolism; IMP biosynthesis via de novo pathway; 5-formamido-1-(5-phospho-D-ribosyl)imidazole-4-carboxamide from 5-amino-1-(5-phospho-D-ribosyl)imidazole-4-carboxamide (10-formyl THF route): step 1/1. It participates in purine metabolism; IMP biosynthesis via de novo pathway; IMP from 5-formamido-1-(5-phospho-D-ribosyl)imidazole-4-carboxamide: step 1/1. This Brucella ovis (strain ATCC 25840 / 63/290 / NCTC 10512) protein is Bifunctional purine biosynthesis protein PurH.